Consider the following 807-residue polypeptide: Glycerol-3-phosphate acyltransferase (807 aa).

Positions 308–313 match the HXXXXD motif motif; the sequence is CHRSHM.

Belongs to the GPAT/DAPAT family.

The protein resides in the cell inner membrane. The catalysed reaction is sn-glycerol 3-phosphate + an acyl-CoA = a 1-acyl-sn-glycero-3-phosphate + CoA. It participates in phospholipid metabolism; CDP-diacylglycerol biosynthesis; CDP-diacylglycerol from sn-glycerol 3-phosphate: step 1/3. The chain is Glycerol-3-phosphate acyltransferase from Shewanella sp. (strain W3-18-1).